A 297-amino-acid chain; its full sequence is uncharacterized protein (297 aa).

Residues 1-44 (MQKSKSIFIPKAFAPQQQAQAPPSKLDNKDPSVEGEGASKPKDD) are disordered. The segment covering 10 to 23 (PKAFAPQQQAQAPP) has biased composition (low complexity). Basic and acidic residues predominate over residues 26–44 (LDNKDPSVEGEGASKPKDD).

This is an uncharacterized protein from Invertebrate iridescent virus 3 (IIV-3).